The sequence spans 272 residues: Cell division protein DivIB (272 aa).

Topologically, residues 1–21 (MRLSSHGKKTVSTSNNPVFNR) are cytoplasmic. The helical transmembrane segment at 22-42 (IGLFFTAAILFALFLQMLFFL) threads the bilayer. A POTRA domain is found at 43-115 (RPWQDIKETK…GTAIIRVNEN (73 aa)). Residues 43–272 (RPWQDIKETK…SSSKSSNSSK (230 aa)) are Extracellular-facing. Residues 253 to 272 (LSSLSSDKSKSSSKSSNSSK) are disordered.

The protein belongs to the FtsQ/DivIB family. DivIB subfamily.

Its subcellular location is the cell membrane. Cell division protein that may be involved in stabilizing or promoting the assembly of the division complex. The sequence is that of Cell division protein DivIB from Oenococcus oeni (strain ATCC BAA-331 / PSU-1).